Here is a 243-residue protein sequence, read N- to C-terminus: Aquaporin SIP1-2 (243 aa).

Transmembrane regions (helical) follow at residues 9 to 29 and 45 to 65; these read AAAADAVVTFLWVLCVSTLGA and FALLVTVSLLSVLLFVFNILC. The NPA 1 signature appears at 74-76; that stretch reads NPT. The next 3 membrane-spanning stretches (helical) occupy residues 98 to 118, 136 to 156, and 163 to 183; these read LPAQAAGAVGGALAISELMPA, GAGAELVLTFVITLAVLLIIV, and IIKTWMISICTLCLVLSGAAY. Residues 189–191 carry the NPA 2 motif; sequence NPA. The helical transmembrane segment at 211–231 threads the bilayer; that stretch reads VYWICPFIGAILAAWIFRAMF.

It belongs to the MIP/aquaporin (TC 1.A.8) family. SIP (TC 1.A.8.10) subfamily.

It is found in the membrane. Functionally, aquaporins facilitate the transport of water and small neutral solutes across cell membranes. The polypeptide is Aquaporin SIP1-2 (SIP1-2) (Zea mays (Maize)).